Here is an 858-residue protein sequence, read N- to C-terminus: Cone cGMP-specific 3',5'-cyclic phosphodiesterase subunit alpha' (858 aa).

GAF domains lie at 75-224 (TPEQ…SIIL) and 256-433 (DVER…GWSL). 3',5'-cyclic GMP contacts are provided by residues Ser-97, Asp-116, 169–172 (DKQT), and Thr-176. In terms of domain architecture, PDEase spans 486–819 (EEKQLVAILK…VEWKSLADEY (334 aa)). The active-site Proton donor is His-562. Residues His-566, His-602, Asp-603, and Asp-723 each contribute to the a divalent metal cation site. Residues 830–852 (AKKQEGGAEKAAEDSGGGDDKKS) show a composition bias toward basic and acidic residues. Residues 830-858 (AKKQEGGAEKAAEDSGGGDDKKSKTCLML) form a disordered region. A Cysteine methyl ester modification is found at Cys-855. Cys-855 carries the S-geranylgeranyl cysteine lipid modification. Positions 856 to 858 (LML) are cleaved as a propeptide — removed in mature form.

It belongs to the cyclic nucleotide phosphodiesterase family. Composed of two alpha' subunits that are associated with 3 smaller proteins of 11, 13, and 15 kDa. Requires a divalent metal cation as cofactor.

The protein localises to the cell membrane. It catalyses the reaction 3',5'-cyclic GMP + H2O = GMP + H(+). Functionally, as cone-specific cGMP phosphodiesterase, it plays an essential role in light detection and cone phototransduction by rapidly decreasing intracellular levels of cGMP. This is Cone cGMP-specific 3',5'-cyclic phosphodiesterase subunit alpha' (PDE6C) from Homo sapiens (Human).